A 543-amino-acid chain; its full sequence is MSSSPSIAQEFLATITPYVEYCQENYTKWYYFIPLVILSLNLISMLHTKYLERKFKAKPLAVYVQDYTFCLITPLVLIYYKSKGTVMQFACDLWDKNLIVSDPKAKTIGLKILGIPLIETKDPENVKAILATQFNDFSLGTRHDFLYSLLGDGIFTLDGAGWKHSRTMLRPQFAREQVSHVKLLEPHMQVLFKHIRKHHGQTFDIQELFFRLTVDSATEFLLGESAESLRDESVGLTPTTKDFDGRNEFADAFNYSQTNQAYRFLLQQMYWILNGSEFRKSIAIVHKFADHYVQKALELTDEDLEKKEGYVFLFELAKQTRDPKVLRDQLLNILVAGRDTTAGLLSFLFFELSRNPEIFAKLREEIENKFGLGQDARVEEISFETLKSCEYLKAVINETLRIYPSVPHNFRVATRNTTLPRGGGEGGLSPIAIKKGQVVMYTILATHRDKDIYGEDAYVFRPERWFEPETRKLGWAYVPFNGGPRICLGQQFALTEASYVTVRLLQEFGNLKQDPNTEYPPKLQNTLTLSLFEGAEVQMYLIL.

The Lumenal segment spans residues 1–28; it reads MSSSPSIAQEFLATITPYVEYCQENYTK. A helical membrane pass occupies residues 29–48; sequence WYYFIPLVILSLNLISMLHT. Residues 49-543 are Cytoplasmic-facing; sequence KYLERKFKAK…GAEVQMYLIL (495 aa). Cys487 contributes to the heme binding site.

This sequence belongs to the cytochrome P450 family. Heme serves as cofactor.

It localises to the endoplasmic reticulum membrane. Its function is as follows. Together with an NADPH cytochrome P450 the enzyme system catalyzes the terminal hydroxylation as the first step in the assimilation of alkanes and fatty acids. The protein is Cytochrome P450 52A1 (CYP52A1) of Candida tropicalis (Yeast).